The chain runs to 196 residues: SPRY domain-containing protein 7 (196 aa).

The region spanning 1–184 is the B30.2/SPRY domain; that stretch reads MAASVFCCLR…FSEFYHTPPP (184 aa).

The chain is SPRY domain-containing protein 7 (SPRYD7) from Gallus gallus (Chicken).